The following is a 205-amino-acid chain: Lymphotoxin-alpha (205 aa).

A signal peptide spans 1–34; sequence MTPPERLFLPRVRGTTLHLLLLGLLLVLLPGAQG. The O-linked (GalNAc...) threonine glycan is linked to threonine 41. The 143-residue stretch at 63 to 205 folds into the THD domain; that stretch reads PAAHLIGDPS…STVFFGAFAL (143 aa). A glycan (N-linked (GlcNAc...) asparagine) is linked at asparagine 96.

It belongs to the tumor necrosis factor family. In terms of assembly, homotrimer, and heterotrimer of either two LTB and one LTA subunits or (less prevalent) two LTA and one LTB subunits. Interacts with TNFRSF14.

The protein localises to the secreted. The protein resides in the membrane. In terms of biological role, cytokine that in its homotrimeric form binds to TNFRSF1A/TNFR1, TNFRSF1B/TNFBR and TNFRSF14/HVEM. In its heterotrimeric form with LTB binds to TNFRSF3/LTBR. Lymphotoxin is produced by lymphocytes and is cytotoxic for a wide range of tumor cells in vitro and in vivo. This Pan troglodytes (Chimpanzee) protein is Lymphotoxin-alpha (LTA).